Reading from the N-terminus, the 228-residue chain is PKHD-type hydroxylase RPE_4577 (228 aa).

A Fe2OG dioxygenase domain is found at 78 to 180; that stretch reads TIFPPLFNRY…RIASFFWTQS (103 aa). Residues histidine 98, aspartate 100, and histidine 161 each contribute to the Fe cation site. Arginine 171 serves as a coordination point for 2-oxoglutarate.

Requires Fe(2+) as cofactor. L-ascorbate is required as a cofactor.

The chain is PKHD-type hydroxylase RPE_4577 from Rhodopseudomonas palustris (strain BisA53).